A 640-amino-acid chain; its full sequence is LRR receptor kinase SERL2 (640 aa).

Residues 1 to 22 form the signal peptide; that stretch reads MEPPFFLLLLLLVVSSSSPSAA. At 23 to 241 the chain is on the extracellular side; sequence LLSAKGVNNE…AARDRGHKFA (219 aa). Residues Asn94 and Asn107 are each glycosylated (N-linked (GlcNAc...) asparagine). LRR repeat units follow at residues 95–119, 120–143, 145–167, and 168–191; these read LTNL…IGRL, ENLK…VGHL, SLQY…SANL, and SHLV…LART. 4 N-linked (GlcNAc...) asparagine glycosylation sites follow: Asn153, Asn166, Asn179, and Asn222. Residues 242 to 262 traverse the membrane as a helical segment; the sequence is VAFGSTAGCMGLLLLAAGFLF. The Cytoplasmic portion of the chain corresponds to 263–640; the sequence is WWRHRRNRQI…VQAVELSGPR (378 aa). The region spanning 304–583 is the Protein kinase domain; it reads FSGKNILGKG…EGDGLADRWE (280 aa). ATP contacts are provided by residues 310-318 and Lys332; that span reads LGKGGFGNV. The Proton acceptor role is filled by Asp427.

This sequence belongs to the protein kinase superfamily. Ser/Thr protein kinase family. In terms of assembly, interacts with MSBP1.

It is found in the cell membrane. The enzyme catalyses L-seryl-[protein] + ATP = O-phospho-L-seryl-[protein] + ADP + H(+). It carries out the reaction L-threonyl-[protein] + ATP = O-phospho-L-threonyl-[protein] + ADP + H(+). In terms of biological role, LRR receptor kinase that may be involved in defense response. In Oryza sativa subsp. japonica (Rice), this protein is LRR receptor kinase SERL2.